The sequence spans 159 residues: Keratin-associated protein 9-8 (159 aa).

Repeat copies occupy residues 8-12 (CCQPT), 13-17 (CCRTT), 32-36 (CCQPS), 37-41 (CCVSS), 46-50 (CCRPT), 51-55 (CCQNT), 56-60 (CCQPI), 65-69 (CCQPS), 70-74 (CCSTP), 75-79 (CCQPT), 80-84 (CCGQT), 129-133 (CCRPA), 134-138 (CCETT), 139-142 (CCRT), and 153-157 (CCQPS). Residues 8–157 (CCQPTCCRTT…TCVSSCCQPS (150 aa)) form a 15 X 5 AA repeats of C-C-[RQVSGE]-[SPSNQ]-[TASPI] region.

The protein belongs to the KRTAP type 9 family. Interacts with hair keratins.

Functionally, in the hair cortex, hair keratin intermediate filaments are embedded in an interfilamentous matrix, consisting of hair keratin-associated proteins (KRTAP), which are essential for the formation of a rigid and resistant hair shaft through their extensive disulfide bond cross-linking with abundant cysteine residues of hair keratins. The matrix proteins include the high-sulfur and high-glycine-tyrosine keratins. The sequence is that of Keratin-associated protein 9-8 (KRTAP9-8) from Homo sapiens (Human).